Reading from the N-terminus, the 690-residue chain is MKKHLHHKVSGSCDPGDRSPKEKGRSQGIRNLLILISLSIIPYLSCLGGDFVFDDAESIVNNPIVNGKDPLLQIFSRDFWGRSISSSNSHKSYRPVTTFTFWLNYKLHETSTLGYHVVNIICHTVATLVFYKLGKQLEHIFDFFNIAFSASILFAVHPVHTEAVANITGRAELLMTIFSLAALILHVKNREINCKFVLLVILSTLSKEQGLMTIPIAICIDFLAHRSCRSNFVRMICLLVAIGFLRMMVNGFEAAKFTKLDNPTAFLNSKFYRMINYTYIWLYHAYLLVIPVNLCFDYSMGCISSITTMWDLRALSPVLIFTIVIIGVKFQNECRAFTLSSLMGIISFLPASNIFFTVGFSIAERVLYLPSAGFCLLCAIIFKKLSVHFKNADVLSITLILLLISKTYRRSGEWKTELSLYSSGLSVCPTNAKIHYNLGKVLGDNGLTKDAEKNYWNAIKLDPSYEQALNNLGNLLEKSGDSKTAESLLARAVTLRPSFAVAWMNLGISQMNLKKYYEAEKSLKNSLLIRPNSAHCLFNLGVLYQRTNRDEMAMSAWKNATRIDPSHSQSWTNLFVVLDHLSQCSQVIDLSYQALSSVPNESRVHMQIGSCHAKHSNFTAAENHIKSAIDLNPTSVLFHANLGILYQRMSRHKEAESQYRIVLALDSKNIVAKQNLQKLEEHNCYNSTLP.

A disordered region spans residues 1 to 24 (MKKHLHHKVSGSCDPGDRSPKEKG). Over 1 to 32 (MKKHLHHKVSGSCDPGDRSPKEKGRSQGIRNL) the chain is Cytoplasmic. The span at 15–24 (PGDRSPKEKG) shows a compositional bias: basic and acidic residues. A helical transmembrane segment spans residues 33–53 (LILISLSIIPYLSCLGGDFVF). Over 54-110 (DDAESIVNNPIVNGKDPLLQIFSRDFWGRSISSSNSHKSYRPVTTFTFWLNYKLHET) the chain is Extracellular. A helical transmembrane segment spans residues 111-131 (STLGYHVVNIICHTVATLVFY). At 132-138 (KLGKQLE) the chain is on the cytoplasmic side. The helical transmembrane segment at 139–159 (HIFDFFNIAFSASILFAVHPV) threads the bilayer. Topologically, residues 160–166 (HTEAVAN) are extracellular. A glycan (N-linked (GlcNAc...) asparagine) is linked at N166. The helical transmembrane segment at 167–187 (ITGRAELLMTIFSLAALILHV) threads the bilayer. At 188-234 (KNREINCKFVLLVILSTLSKEQGLMTIPIAICIDFLAHRSCRSNFVR) the chain is on the cytoplasmic side. The chain crosses the membrane as a helical span at residues 235-255 (MICLLVAIGFLRMMVNGFEAA). Over 256–273 (KFTKLDNPTAFLNSKFYR) the chain is Extracellular. A helical membrane pass occupies residues 274 to 294 (MINYTYIWLYHAYLLVIPVNL). Over 295–307 (CFDYSMGCISSIT) the chain is Cytoplasmic. The helical transmembrane segment at 308-328 (TMWDLRALSPVLIFTIVIIGV) threads the bilayer. At 329-341 (KFQNECRAFTLSS) the chain is on the extracellular side. A helical membrane pass occupies residues 342-362 (LMGIISFLPASNIFFTVGFSI). The Cytoplasmic segment spans residues 363 to 365 (AER). Residues 366–386 (VLYLPSAGFCLLCAIIFKKLS) traverse the membrane as a helical segment. Topologically, residues 387 to 690 (VHFKNADVLS…EHNCYNSTLP (304 aa)) are extracellular. 5 TPR repeats span residues 398-431 (TLILLLISKTYRRSGEWKTELSLYSSGLSVCPTN), 432-465 (AKIHYNLGKVLGDNGLTKDAEKNYWNAIKLDPSY), 466-499 (EQALNNLGNLLEKSGDSKTAESLLARAVTLRPSF), 500-533 (AVAWMNLGISQMNLKKYYEAEKSLKNSLLIRPNS), and 534-567 (AHCLFNLGVLYQRTNRDEMAMSAWKNATRIDPSH). N-linked (GlcNAc...) asparagine glycans are attached at residues N559, N600, and N617. 2 TPR repeats span residues 602–635 (SRVHMQIGSCHAKHSNFTAAENHIKSAIDLNPTS) and 636–669 (VLFHANLGILYQRMSRHKEAESQYRIVLALDSKN). An N-linked (GlcNAc...) asparagine glycan is attached at N686.

It belongs to the TMTC family.

Its subcellular location is the membrane. It localises to the endoplasmic reticulum. It catalyses the reaction a di-trans,poly-cis-dolichyl beta-D-mannosyl phosphate + L-seryl-[protein] = 3-O-(alpha-D-mannosyl)-L-seryl-[protein] + a di-trans,poly-cis-dolichyl phosphate + H(+). The enzyme catalyses a di-trans,poly-cis-dolichyl beta-D-mannosyl phosphate + L-threonyl-[protein] = 3-O-(alpha-D-mannosyl)-L-threonyl-[protein] + a di-trans,poly-cis-dolichyl phosphate + H(+). Its pathway is protein modification; protein glycosylation. Transfers mannosyl residues to the hydroxyl group of serine or threonine residues. This is Protein O-mannosyl-transferase F38B6.6 from Caenorhabditis elegans.